A 441-amino-acid polypeptide reads, in one-letter code: UDP-N-acetylglucosamine--peptide N-acetylglucosaminyltransferase stabilizing protein GtfB (441 aa).

Belongs to the GtfB family. In terms of assembly, forms a heterotetramer with 2 subunits each of GtfA and GtfB. Part of the accessory SecA2/SecY2 protein translocation apparatus.

It is found in the cell membrane. Its pathway is protein modification; protein glycosylation. Required for polymorphic O-glycosylation of the serine-rich repeat protein (SRRP) in this bacteria. A stabilizing protein that is part of the accessory SecA2/SecY2 system specifically required to export serine-rich repeat cell wall proteins encoded in the same operon. The GtfA-GtfB complex adds GlcNAc from UDP-GlcNAc to the substrate protein, attaching the first sugar residue. Stabilizes the glycosylation activity of GtfA. Has no N-acetylglucosaminyl transferase activity on its own. This is UDP-N-acetylglucosamine--peptide N-acetylglucosaminyltransferase stabilizing protein GtfB from Limosilactobacillus reuteri subsp. suis (strain ATCC 53608 / LMG 31752 / 1063) (Lactobacillus reuteri).